The following is a 324-amino-acid chain: Tetrahydromethanopterin:alpha-L-glutamate ligase (324 aa).

An ATP-grasp domain is found at 113–321; the sequence is SYLLARAGLP…PAEYILEYLQ (209 aa). Residues Lys-148, 195-204, and Arg-220 each bind ATP; that span reads QEFIENPGRD. Position 265 (Asp-265) interacts with Mg(2+). Mn(2+) is bound at residue Asp-265. The disordered stretch occupies residues 274-293; that stretch reads TGNENKKTEDKSTGQGSRIL. Residues Glu-294 and Asn-296 each contribute to the Mg(2+) site. Mn(2+)-binding residues include Glu-294 and Asn-296.

It belongs to the RimK family. MptN subfamily. In terms of assembly, homodimer. The cofactor is Mg(2+). It depends on Mn(2+) as a cofactor.

The catalysed reaction is 5,6,7,8-tetrahydromethanopterin + L-glutamate + ATP = 5,6,7,8-tetrahydrosarcinapterin + ADP + phosphate + H(+). It participates in cofactor biosynthesis; 5,6,7,8-tetrahydrosarcinapterin biosynthesis. Functionally, catalyzes the ATP or GTP-dependent addition of one L-glutamate molecule to tetrahydromethanopterin, producing tetrahydrosarcinapterin. The polypeptide is Tetrahydromethanopterin:alpha-L-glutamate ligase (mptN) (Methanosarcina acetivorans (strain ATCC 35395 / DSM 2834 / JCM 12185 / C2A)).